Here is a 247-residue protein sequence, read N- to C-terminus: Terpene cyclase ausL (247 aa).

The next 6 helical transmembrane spans lie at 49 to 69, 75 to 95, 114 to 134, 138 to 158, 171 to 191, and 206 to 226; these read AIAV…AWIY, HWQG…AATL, LVLL…CLAL, GALG…SGAV, SLVI…KLCI, and PMCW…PVLY.

This sequence belongs to the paxB family.

It is found in the membrane. It participates in secondary metabolite biosynthesis; terpenoid biosynthesis. Functionally, terpene cyclase; part of the gene cluster that mediates the biosynthesis of calidodehydroaustin, a fungal meroterpenoid. The first step of the pathway is the synthesis of 3,5-dimethylorsellinic acid by the polyketide synthase ausA. 3,5-dimethylorsellinic acid is then prenylated by the polyprenyl transferase ausN. Further epoxidation by the FAD-dependent monooxygenase ausM and cyclization by the probable terpene cyclase ausL lead to the formation of protoaustinoid A. Protoaustinoid A is then oxidized to spiro-lactone preaustinoid A3 by the combined action of the FAD-binding monooxygenases ausB and ausC, and the dioxygenase ausE. Acid-catalyzed keto-rearrangement and ring contraction of the tetraketide portion of preaustinoid A3 by ausJ lead to the formation of preaustinoid A4. The aldo-keto reductase ausK, with the help of ausH, is involved in the next step by transforming preaustinoid A4 into isoaustinone which is in turn hydroxylated by the P450 monooxygenase ausI to form austinolide. The cytochrome P450 monooxygenase ausG modifies austinolide to austinol. Austinol is further acetylated to austin by the O-acetyltransferase ausP, which spontaneously changes to dehydroaustin. The cytochrome P450 monooxygenase ausR then converts dehydroaustin is into 7-dehydrodehydroaustin. The hydroxylation catalyzed by ausR permits the O-acetyltransferase ausQ to add an additional acetyl group to the molecule, leading to the formation of acetoxydehydroaustin. The short chain dehydrogenase ausT catalyzes the reduction of the double bond present between carbon atoms 1 and 2 to convert 7-dehydrodehydroaustin into 1,2-dihydro-7-hydroxydehydroaustin. AusQ catalyzes not only an acetylation reaction but also the addition of the PKS ausV diketide product to 1,2-dihydro-7-hydroxydehydroaustin, forming precalidodehydroaustin. Finally, the iron/alpha-ketoglutarate-dependent dioxygenase converts precalidodehydroaustin into calidodehydroaustin. The sequence is that of Terpene cyclase ausL from Aspergillus calidoustus.